A 449-amino-acid polypeptide reads, in one-letter code: Probable secreted beta-glucosidase ARB_04747 (449 aa).

The N-terminal stretch at 1-21 (MKFSSGILSLAVAASVQSVQA) is a signal peptide. Residue asparagine 57 is glycosylated (N-linked (GlcNAc...) asparagine). The disordered stretch occupies residues 96–185 (SPPACPAPSY…RPFPDGEIDC (90 aa)). The span at 98–125 (PACPAPSYVPSPPAAPSSPPAAPQPPSK) shows a compositional bias: pro residues. Residues 131-150 (EEPKKPEEPKKPEGPKKPEG) show a composition bias toward basic and acidic residues.

Belongs to the SUN family.

The protein resides in the secreted. The protein localises to the cell wall. Its function is as follows. Cell surface beta-glucosidase involved in cytokinesis, cell wall biogenesis, adhesion to host tissue; thus playing an important role in the host-pathogen interaction. Has hydrolytic activity on linear (1-&gt;3)-beta-D-glucans such as laminaribiose and other laminarioligosaccharides. In Arthroderma benhamiae (strain ATCC MYA-4681 / CBS 112371) (Trichophyton mentagrophytes), this protein is Probable secreted beta-glucosidase ARB_04747.